We begin with the raw amino-acid sequence, 140 residues long: 3-hydroxyacyl-[acyl-carrier-protein] dehydratase FabZ (140 aa).

The active site involves His-48.

The protein belongs to the thioester dehydratase family. FabZ subfamily.

The protein resides in the cytoplasm. It catalyses the reaction a (3R)-hydroxyacyl-[ACP] = a (2E)-enoyl-[ACP] + H2O. In terms of biological role, involved in unsaturated fatty acids biosynthesis. Catalyzes the dehydration of short chain beta-hydroxyacyl-ACPs and long chain saturated and unsaturated beta-hydroxyacyl-ACPs. The sequence is that of 3-hydroxyacyl-[acyl-carrier-protein] dehydratase FabZ from Halalkalibacterium halodurans (strain ATCC BAA-125 / DSM 18197 / FERM 7344 / JCM 9153 / C-125) (Bacillus halodurans).